The following is an 857-amino-acid chain: DNA mismatch repair protein MutS (857 aa).

613-620 contributes to the ATP binding site; the sequence is GPNMGGKS. A disordered region spans residues 797–820; that stretch reads TSLPHEQPAAHKAKDAPQVPHQSD.

It belongs to the DNA mismatch repair MutS family.

Functionally, this protein is involved in the repair of mismatches in DNA. It is possible that it carries out the mismatch recognition step. This protein has a weak ATPase activity. The polypeptide is DNA mismatch repair protein MutS (Pseudomonas putida (strain ATCC 47054 / DSM 6125 / CFBP 8728 / NCIMB 11950 / KT2440)).